A 490-amino-acid chain; its full sequence is MSSKISPHVRVRFAPSPTGYLHVGGARTALYNYLFAKKNGGEFILRIEDTDEARSTQESLRGVVDDLVWLGLKWDEGVDPVTLKDVGPNGPYRQSERLHIYKEIADQLLKEGKAYYCFMTEEDIEKQKAAAGSFAHLVSPYQDWTLDQALERLKTGDKAVVRFKTKNLVKDYIFTDLVRGEVKFPSDMVGDFVLLRSDGMPVYNFCCVVDDHLMKMTHVFRAEEHLPNTLRQLMIYEAMNWPTPEFGHMALILDEDRQKLSKRKGAVACGQLKDEGYLASAVLNFIALLGWSDPQGREILSVKDMLEVFDISRLNPSGAIFDRVKFKWMNAQHLRALPNAELWQAVAPFLARENMDLPTDPAWQSKSLDLFKPYMEILADAIELYRPLNDKSYVILPEADETLKWESTKAVLTSWKNLLQAHPSDYMTEEEFLKMQDEVKNQTGSKGKHLFMPIRVAVIGKPHGAELKTLVPLMKKSSLVARAEQALAKV.

The 'HIGH' region motif lies at 15 to 25; that stretch reads PSPTGYLHVGG. The 'KMSKS' region signature appears at 259 to 263; sequence KLSKR. Lys-262 is an ATP binding site.

Belongs to the class-I aminoacyl-tRNA synthetase family. Glutamate--tRNA ligase type 1 subfamily. Monomer.

The protein localises to the cytoplasm. It catalyses the reaction tRNA(Glu) + L-glutamate + ATP = L-glutamyl-tRNA(Glu) + AMP + diphosphate. Catalyzes the attachment of glutamate to tRNA(Glu) in a two-step reaction: glutamate is first activated by ATP to form Glu-AMP and then transferred to the acceptor end of tRNA(Glu). The protein is Glutamate--tRNA ligase of Bdellovibrio bacteriovorus (strain ATCC 15356 / DSM 50701 / NCIMB 9529 / HD100).